We begin with the raw amino-acid sequence, 326 residues long: ELMO domain-containing protein 1 (326 aa).

One can recognise an ELMO domain in the interval 133-306 (QHEEMLLKLW…KFRKRIIKQL (174 aa)).

Functionally, acts as a GTPase-activating protein (GAP) toward guanine nucleotide exchange factors like ARL2, ARL3, ARF1 and ARF6, but not for GTPases outside the Arf family. The polypeptide is ELMO domain-containing protein 1 (ELMOD1) (Pongo abelii (Sumatran orangutan)).